The sequence spans 274 residues: 2,3,4,5-tetrahydropyridine-2,6-dicarboxylate N-succinyltransferase (274 aa).

Substrate contacts are provided by arginine 104 and aspartate 141.

The protein belongs to the transferase hexapeptide repeat family. As to quaternary structure, homotrimer.

It localises to the cytoplasm. It catalyses the reaction (S)-2,3,4,5-tetrahydrodipicolinate + succinyl-CoA + H2O = (S)-2-succinylamino-6-oxoheptanedioate + CoA. It participates in amino-acid biosynthesis; L-lysine biosynthesis via DAP pathway; LL-2,6-diaminopimelate from (S)-tetrahydrodipicolinate (succinylase route): step 1/3. The polypeptide is 2,3,4,5-tetrahydropyridine-2,6-dicarboxylate N-succinyltransferase (Sodalis glossinidius (strain morsitans)).